Consider the following 782-residue polypeptide: Fibrinogen alpha chain (782 aa).

The signal sequence occupies residues 1–19 (MLSLRVACLILSLASTVWT). A coiled-coil region spans residues 68 to 547 (GCRMKGLIDE…KRGRARTMRD (480 aa)). A compositionally biased stretch (basic and acidic residues) spans 264-283 (RPGKDGASRGDLPGDSRGDS). Positions 264–374 (RPGKDGASRG…PATRKEYHTG (111 aa)) are disordered. Position 279 is a phosphoserine (serine 279). The span at 311-323 (SGSGSDGNWGSGT) shows a compositional bias: gly residues. 2 stretches are compositionally biased toward low complexity: residues 324–344 (TGSD…SGSG) and 354–364 (GEFSEFGGSSS). Serine 326 carries the phosphoserine modification. A disulfide bridge connects residues cysteine 404 and cysteine 434. The residue at position 470 (serine 470) is a Phosphoserine. Proline 499 carries the 4-hydroxyproline; by P4HA1 modification. The span at 522–536 (DEAASEAHQEGDTRT) shows a compositional bias: basic and acidic residues. Residues 522–542 (DEAASEAHQEGDTRTTKRGRA) form a disordered region. Serine 526 carries the phosphoserine modification. Residues 539–780 (RGRARTMRDC…AVRMKIRPLV (242 aa)) enclose the Fibrinogen C-terminal domain. An N-linked (GlcNAc...) asparagine glycan is attached at asparagine 602. Ca(2+) is bound by residues aspartate 707, aspartate 709, tryptophan 711, and glutamate 713. A disulfide bridge links cysteine 715 with cysteine 728.

In terms of assembly, heterohexamer; disulfide linked. Contains 2 sets of 3 non-identical chains (alpha, beta and gamma). The 2 heterotrimers are in head to head conformation with the N-termini in a small central domain. In terms of processing, conversion of fibrinogen to fibrin is triggered by thrombin, which cleaves fibrinopeptides A and B from alpha and beta chains, and thus exposes the N-terminal polymerization sites responsible for the formation of the soft clot. The soft clot is converted into the hard clot by factor XIIIA which catalyzes the epsilon-(gamma-glutamyl)lysine cross-linking between gamma chains (stronger) and between alpha chains (weaker) of different monomers. Post-translationally, forms F13A-mediated cross-links between a glutamine and the epsilon-amino group of a lysine residue, forming fibronectin-fibrinogen heteropolymers. Phosphorylated by FAM20C in the extracellular medium.

The protein localises to the secreted. Cleaved by the protease thrombin to yield monomers which, together with fibrinogen beta (FGB) and fibrinogen gamma (FGG), polymerize to form an insoluble fibrin matrix. Fibrin has a major function in hemostasis as one of the primary components of blood clots. In addition, functions during the early stages of wound repair to stabilize the lesion and guide cell migration during re-epithelialization. Was originally thought to be essential for platelet aggregation, based on in vitro studies using anticoagulated blood. However, subsequent studies have shown that it is not absolutely required for thrombus formation in vivo. Enhances expression of SELP in activated platelets via an ITGB3-dependent pathway. Maternal fibrinogen is essential for successful pregnancy. Fibrin deposition is also associated with infection, where it protects against IFNG-mediated hemorrhage. May also facilitate the immune response via both innate and T-cell mediated pathways. This chain is Fibrinogen alpha chain (Fga), found in Rattus norvegicus (Rat).